The sequence spans 501 residues: Proline--tRNA ligase (501 aa).

It belongs to the class-II aminoacyl-tRNA synthetase family.

The catalysed reaction is tRNA(Pro) + L-proline + ATP = L-prolyl-tRNA(Pro) + AMP + diphosphate. This is Proline--tRNA ligase from Encephalitozoon cuniculi (strain GB-M1) (Microsporidian parasite).